The sequence spans 388 residues: Alanine racemase (388 aa).

Lys-44 acts as the Proton acceptor; specific for D-alanine in catalysis. Lys-44 is modified (N6-(pyridoxal phosphate)lysine). Arg-142 lines the substrate pocket. The active-site Proton acceptor; specific for L-alanine is the Tyr-273. Met-321 serves as a coordination point for substrate.

It belongs to the alanine racemase family. Requires pyridoxal 5'-phosphate as cofactor.

It carries out the reaction L-alanine = D-alanine. The protein operates within amino-acid biosynthesis; D-alanine biosynthesis; D-alanine from L-alanine: step 1/1. Catalyzes the interconversion of L-alanine and D-alanine. May also act on other amino acids. This Mycobacterium avium (strain 104) protein is Alanine racemase (alr).